Consider the following 656-residue polypeptide: FAST kinase domain-containing protein 3, mitochondrial (656 aa).

One can recognise an RAP domain in the interval 587-645 (VALCIDGPQRFCLGSKHLLGKEAIKQRHLRLLGYQVVQVPYHELELLTSRLELVDYLQR).

This sequence belongs to the FAST kinase family.

The protein localises to the mitochondrion. Its function is as follows. Required for normal mitochondrial respiration. Increases steady-state levels and half-lives of a subset of mature mitochondrial mRNAs MT-ND2, MT-ND3, MT-CYTB, MT-CO2, and MT-ATP8/6. Promotes MT-CO1 mRNA translation and increases mitochondrial complex IV assembly and activity. This chain is FAST kinase domain-containing protein 3, mitochondrial (Fastkd3), found in Rattus norvegicus (Rat).